Consider the following 179-residue polypeptide: MMRRPHGQAAMPMSGPRYNEFIQSPRVRVIDENGENLGVMYTRQAMEQAQEVGLDLVEVSPNADPPVAKFLDVGKYKYEAQKKANLARKTQKTQEIKEIKLRPNIDQHDYDTKMKKIVQFLEDGDKVKVTLRFRGREMAHGQLGMQVMQRVQADTQEIAKVEQHPRMEGRQMLMVVAPK.

It belongs to the IF-3 family. Monomer.

The protein localises to the cytoplasm. Functionally, IF-3 binds to the 30S ribosomal subunit and shifts the equilibrium between 70S ribosomes and their 50S and 30S subunits in favor of the free subunits, thus enhancing the availability of 30S subunits on which protein synthesis initiation begins. The sequence is that of Translation initiation factor IF-3 from Zymomonas mobilis subsp. mobilis (strain ATCC 31821 / ZM4 / CP4).